Reading from the N-terminus, the 83-residue chain is Apolipoprotein C-I, acidic form (83 aa).

Residues Met-1–Gly-26 form the signal peptide.

It belongs to the apolipoprotein C1 family.

The protein localises to the secreted. This Pan troglodytes (Chimpanzee) protein is Apolipoprotein C-I, acidic form (APOC1A).